The following is a 324-amino-acid chain: Annexin A10 (324 aa).

Annexin repeat units follow at residues 17 to 88 (FNPM…GLMY), 89 to 160 (PPPS…NLVQ), 171 to 243 (AMAA…AIVR), and 247 to 318 (DKPS…AICA).

This sequence belongs to the annexin family.

This chain is Annexin A10 (Anxa10), found in Mus musculus (Mouse).